The chain runs to 540 residues: Membrane protein insertase YidC (540 aa).

Residues N6–A26 form a helical membrane-spanning segment. The tract at residues Q36–A63 is disordered. The next 4 membrane-spanning stretches (helical) occupy residues A342 to V362, L417 to L437, L455 to I475, and P496 to V516.

The protein belongs to the OXA1/ALB3/YidC family. Type 1 subfamily. In terms of assembly, interacts with the Sec translocase complex via SecD. Specifically interacts with transmembrane segments of nascent integral membrane proteins during membrane integration.

Its subcellular location is the cell inner membrane. Its function is as follows. Required for the insertion and/or proper folding and/or complex formation of integral membrane proteins into the membrane. Involved in integration of membrane proteins that insert both dependently and independently of the Sec translocase complex, as well as at least some lipoproteins. Aids folding of multispanning membrane proteins. This chain is Membrane protein insertase YidC, found in Vibrio campbellii (strain ATCC BAA-1116).